Here is a 678-residue protein sequence, read N- to C-terminus: Protein CASP (678 aa).

The Cytoplasmic segment spans residues 1 to 619 (MAANVGSMFQ…LVLSNKMART (619 aa)). 2 coiled-coil regions span residues 67–450 (LLKS…QDLS) and 502–556 (LSII…FLQS). Phosphoserine is present on serine 586. Residues 620–640 (IGFFYTLFLHCLVFLVLYKLA) form a helical; Anchor for type IV membrane protein membrane-spanning segment. Topologically, residues 641–678 (WSESMERDCATFCAKKFADHLHKFHENDNGAAAGDLWQ) are lumenal.

It belongs to the CASP family. Homodimer; disulfide-linked. Interacts with GOLGA5.

It is found in the golgi apparatus membrane. May be involved in intra-Golgi retrograde transport. This chain is Protein CASP (CUX1), found in Homo sapiens (Human).